Consider the following 1019-residue polypeptide: Photoactivated adenylate cyclase subunit alpha-like protein FB (1019 aa).

Residues 55-148 (LRRLMYLSAS…GRLYGEWHMK (94 aa)) form the BLUF 1 domain. In terms of domain architecture, Guanylate cyclase 1 spans 204–332 (VVTFIYLVEF…DCINTASRIT (129 aa)). A BLUF 2 domain is found at 467–559 (LITLTYISQA…REYGSPLDMT (93 aa)). The 130-residue stretch at 615-744 (VLLATDICSF…EVSARVMEVV (130 aa)) folds into the Guanylate cyclase 2 domain. Residues 825–839 (APGRGAPAGGIPSSP) are compositionally biased toward low complexity. The interval 825-862 (APGRGAPAGGIPSSPKVRPPGRTNSVSSYTPDPNEALD) is disordered. Polar residues predominate over residues 846–855 (RTNSVSSYTP).

Belongs to the adenylyl cyclase class-4/guanylyl cyclase family. As to quaternary structure, heterotetramer of two alpha and two beta subunits.

Its subcellular location is the cell projection. The protein localises to the cilium. It localises to the flagellum. This Euglena gracilis protein is Photoactivated adenylate cyclase subunit alpha-like protein FB.